Reading from the N-terminus, the 568-residue chain is MMRRLVSYFVRSRFSLHLSTTPPQRSALFSHILSSHLDSIQINKKISSFSVHRFCSTTLLNPELEITRIEKVSEDQSLVYCNENDIRTKGSNHAVGILHEAIMANLNAYDDMEKALDESSVDLTTPVVCKILQRLQYEEKTAFRFFTWAGHQEHYSHEPIAYNEMIDILSSTKYKNKQFRIVIDMLDYMKRNNKTVVLVDVLLEILRKYCERYLTHVQKFAKRKRIRVKTQPEINAFNMLLDALCKCGLVKEGEALLRRMRHRVKPDANTFNVLFFGWCRVRDPKKAMKLLEEMIEAGHKPENFTYCAAIDTFCQAGMVDEAADLFDFMITKGSAVSAPTAKTFALMIVALAKNDKAEECFELIGRMISTGCLPDVSTYKDVIEGMCMAEKVDEAYKFLDEMSNKGYPPDIVTYNCFLRVLCENRKTDEALKLYGRMVESRCAPSVQTYNMLISMFFEMDDPDGAFNTWTEMDKRDCVQDVETYCAMINGLFDCHRAKEACFLLEEVVNKGLKLPYRVFDSFLMRLSEVGNLKAIHKVSEHMKKFYNHSMARRFALSEKRKSTKLRGK.

A mitochondrion-targeting transit peptide spans 1–55 (MMRRLVSYFVRSRFSLHLSTTPPQRSALFSHILSSHLDSIQINKKISSFSVHRFC). PPR repeat units follow at residues 233–263 (EINAFNMLLDALCKCGLVKEGEALLRRMRHR), 267–301 (DANTFNVLFFGWCRVRDPKKAMKLLEEMIEAGHKP), 302–336 (ENFTYCAAIDTFCQAGMVDEAADLFDFMITKGSAV), 340–374 (TAKTFALMIVALAKNDKAEECFELIGRMISTGCLP), 375–409 (DVSTYKDVIEGMCMAEKVDEAYKFLDEMSNKGYPP), 410–444 (DIVTYNCFLRVLCENRKTDEALKLYGRMVESRCAP), 445–479 (SVQTYNMLISMFFEMDDPDGAFNTWTEMDKRDCVQ), and 480–514 (DVETYCAMINGLFDCHRAKEACFLLEEVVNKGLKL).

It belongs to the PPR family. P subfamily.

It localises to the mitochondrion. The chain is Pentatricopeptide repeat-containing protein At1g73400, mitochondrial from Arabidopsis thaliana (Mouse-ear cress).